Here is a 412-residue protein sequence, read N- to C-terminus: Probable inactive allantoicase (412 aa).

It belongs to the allantoicase family.

In terms of biological role, the function of this enzyme is unclear as allantoicase activity is not known to exist in mammals. The chain is Probable inactive allantoicase (ALLC) from Bos taurus (Bovine).